We begin with the raw amino-acid sequence, 207 residues long: LexA repressor (207 aa).

A DNA-binding region (H-T-H motif) is located at residues 28-48 (RAEISRELGFKSANAAEEHLK). Active-site for autocatalytic cleavage activity residues include Ser123 and Lys160.

Belongs to the peptidase S24 family. As to quaternary structure, homodimer.

It carries out the reaction Hydrolysis of Ala-|-Gly bond in repressor LexA.. Represses a number of genes involved in the response to DNA damage (SOS response), including recA and lexA. In the presence of single-stranded DNA, RecA interacts with LexA causing an autocatalytic cleavage which disrupts the DNA-binding part of LexA, leading to derepression of the SOS regulon and eventually DNA repair. The sequence is that of LexA repressor from Haemophilus influenzae (strain 86-028NP).